Here is a 496-residue protein sequence, read N- to C-terminus: Sporulation-killing factor biosynthesis protein SkfC (496 aa).

A run of 7 helical transmembrane segments spans residues 1 to 21 (MNSL…LLFI), 224 to 244 (VSGM…LVFM), 248 to 268 (TSII…SLTL), 291 to 311 (LLGI…VFIC), 331 to 351 (IVQI…TSLL), 399 to 419 (LLMI…IIVS), and 443 to 463 (FIFG…CVLV).

It localises to the membrane. Its function is as follows. Required for production of the bacteriocin SkfA. This chain is Sporulation-killing factor biosynthesis protein SkfC, found in Bacillus subtilis (strain 168).